The primary structure comprises 501 residues: Probable malate:quinone oxidoreductase (501 aa).

This sequence belongs to the MQO family. FAD is required as a cofactor.

It carries out the reaction (S)-malate + a quinone = a quinol + oxaloacetate. Its pathway is carbohydrate metabolism; tricarboxylic acid cycle; oxaloacetate from (S)-malate (quinone route): step 1/1. This is Probable malate:quinone oxidoreductase from Mycolicibacterium paratuberculosis (strain ATCC BAA-968 / K-10) (Mycobacterium paratuberculosis).